The following is a 358-amino-acid chain: Peptide chain release factor 1 (358 aa).

An N5-methylglutamine modification is found at Gln237.

The protein belongs to the prokaryotic/mitochondrial release factor family. Methylated by PrmC. Methylation increases the termination efficiency of RF1.

The protein resides in the cytoplasm. Peptide chain release factor 1 directs the termination of translation in response to the peptide chain termination codons UAG and UAA. This Mycoplasma mobile (strain ATCC 43663 / 163K / NCTC 11711) (Mesomycoplasma mobile) protein is Peptide chain release factor 1.